Here is a 206-residue protein sequence, read N- to C-terminus: Oligoribonuclease (206 aa).

The 164-residue stretch at Leu-20 to Leu-183 folds into the Exonuclease domain. Residue Tyr-141 is part of the active site.

This sequence belongs to the oligoribonuclease family.

Its subcellular location is the cytoplasm. In terms of biological role, 3'-to-5' exoribonuclease specific for small oligoribonucleotides. In Burkholderia cenocepacia (strain HI2424), this protein is Oligoribonuclease.